The following is a 795-amino-acid chain: Protein espinas (795 aa).

The segment at glycine 30 to cysteine 96 is disordered. A compositionally biased stretch (low complexity) spans alanine 52–asparagine 66. Positions leucine 135–proline 243 constitute a PET domain. LIM zinc-binding domains are found at residues arginine 242–lysine 306, proline 307–glutamate 367, and tyrosine 368–proline 430. Disordered regions lie at residues glycine 427–glycine 487 and asparagine 616–isoleucine 684. Basic and acidic residues-rich tracts occupy residues arginine 459–arginine 471 and leucine 637–serine 649. The segment covering valine 650 to aspartate 662 has biased composition (polar residues). Over residues alanine 666–glutamine 675 the composition is skewed to basic residues.

It belongs to the prickle / espinas / testin family.

The chain is Protein espinas from Drosophila pseudoobscura pseudoobscura (Fruit fly).